Reading from the N-terminus, the 393-residue chain is DNA primase small subunit PriS (393 aa).

Residues D100, D102, and D296 contribute to the active site.

It belongs to the eukaryotic-type primase small subunit family. In terms of assembly, heterodimer of a small subunit (PriS) and a large subunit (PriL). Mg(2+) serves as cofactor. It depends on Mn(2+) as a cofactor.

In terms of biological role, catalytic subunit of DNA primase, an RNA polymerase that catalyzes the synthesis of short RNA molecules used as primers for DNA polymerase during DNA replication. The small subunit contains the primase catalytic core and has DNA synthesis activity on its own. Binding to the large subunit stabilizes and modulates the activity, increasing the rate of DNA synthesis while decreasing the length of the DNA fragments, and conferring RNA synthesis capability. The DNA polymerase activity may enable DNA primase to also catalyze primer extension after primer synthesis. May also play a role in DNA repair. The sequence is that of DNA primase small subunit PriS from Natronomonas pharaonis (strain ATCC 35678 / DSM 2160 / CIP 103997 / JCM 8858 / NBRC 14720 / NCIMB 2260 / Gabara) (Halobacterium pharaonis).